The sequence spans 2193 residues: Genome polyprotein (2193 aa).

The segment at 1-23 (MGSQVSTQRSGSHENSNSASEGS) is disordered. The N-myristoyl glycine; by host moiety is linked to residue G2. Residues 2–1503 (GSQVSTQRSG…HLNRAVLVMQ (1502 aa)) lie on the Cytoplasmic side of the membrane. Residues 566–588 (GDPIADMIDQTVNNQVNRSLTAL) form an amphipathic alpha-helix region. Catalysis depends on for protease 2A activity residues H883 and D901. Residues C918 and C920 each coordinate Zn(2+). The active-site For protease 2A activity is C972. The Zn(2+) site is built by C978 and H980. The segment at 1112–1184 (SASWLKKFND…EQSAASQEDL (73 aa)) is membrane-binding. Residues 1112 to 1250 (SASWLKKFND…SPGTGKSLAT (139 aa)) are oligomerization. An RNA-binding region spans residues 1133–1137 (SSKIS). Residues 1216–1374 (EKRMNNYMQF…YKTDLGRLDA (159 aa)) enclose the SF3 helicase domain. An ATP-binding site is contributed by 1240 to 1247 (GSPGTGKS). Residues C1381, C1392, and C1397 each coordinate Zn(2+). The C4-type; degenerate zinc finger occupies 1381–1397 (CTENNTANFKRCSPLVC). The RNA-binding stretch occupies residues 1424–1431 (EYNNRSAI). The tract at residues 1435-1440 (IEALFQ) is oligomerization. An intramembrane segment occupies 1504-1519 (SIATVVAVVSLVYVIY). Residues 1520–2193 (KLFAGFQGAY…NLRRNWLELF (674 aa)) lie on the Cytoplasmic side of the membrane. O-(5'-phospho-RNA)-tyrosine is present on Y1529. A Peptidase C3 domain is found at 1549-1727 (GPSLDFALSL…FCAGLKRGYF (179 aa)). Active-site for protease 3C activity residues include H1588, E1619, and C1695. The RdRp catalytic domain maps to 1958–2074 (GSLFAFDYSG…SYPFPIDCSE (117 aa)). The Mg(2+) site is built by D1964 and D2060.

This sequence belongs to the picornaviruses polyprotein family. Interacts with capsid protein VP1 and capsid protein VP3 to form heterotrimeric protomers. In terms of assembly, interacts with capsid protein VP0, and capsid protein VP3 to form heterotrimeric protomers. Five protomers subsequently associate to form pentamers which serve as building blocks for the capsid. Interacts with capsid protein VP2, capsid protein VP3 and capsid protein VP4 following cleavage of capsid protein VP0. As to quaternary structure, interacts with capsid protein VP1 and capsid protein VP3 in the mature capsid. Interacts with capsid protein VP0 and capsid protein VP1 to form heterotrimeric protomers. Five protomers subsequently associate to form pentamers which serve as building blocks for the capsid. Interacts with capsid protein VP4 in the mature capsid. Interacts with protein 2C; this interaction may be important for virion morphogenesis. In terms of assembly, interacts with capsid protein VP1 and capsid protein VP3. As to quaternary structure, homodimer. Homohexamer; forms a hexameric ring structure with 6-fold symmetry characteristic of AAA+ ATPases. Interacts (via N-terminus) with host RTN3 (via reticulon domain); this interaction is important for viral replication. Interacts with capsid protein VP3; this interaction may be important for virion morphogenesis. In terms of assembly, interacts with protein 3CD. As to quaternary structure, homodimer. Interacts with host GBF1. Interacts (via GOLD domain) with host ACBD3 (via GOLD domain); this interaction allows the formation of a viral protein 3A/ACBD3 heterotetramer with a 2:2 stoichiometry, which will stimulate the recruitment of host PI4KB in order to synthesize PI4P at the viral RNA replication sites. Interacts with RNA-directed RNA polymerase. In terms of assembly, interacts with host IFIH1/MDA5; this interaction inhibits host IFIH1. As to quaternary structure, protein 3CD: Interacts with protein 3AB and with RNA-directed RNA polymerase. Interacts with Viral protein genome-linked and with protein 3CD. Mg(2+) serves as cofactor. Post-translationally, specific enzymatic cleavages in vivo by the viral proteases yield processing intermediates and the mature proteins. Myristoylation is required for the formation of pentamers during virus assembly. Further assembly of 12 pentamers and a molecule of genomic RNA generates the provirion. In terms of processing, during virion maturation, immature virions are rendered infectious following cleavage of VP0 into VP4 and VP2. This maturation seems to be an autocatalytic event triggered by the presence of RNA in the capsid and it is followed by a conformational change infectious virion. Post-translationally, myristoylation is required during RNA encapsidation and formation of the mature virus particle. VPg is uridylylated by the polymerase into VPg-pUpU. This acts as a nucleotide-peptide primer for the genomic RNA replication.

It localises to the virion. Its subcellular location is the host cytoplasm. The protein localises to the host cytoplasmic vesicle membrane. It is found in the host nucleus. It carries out the reaction a ribonucleoside 5'-triphosphate + H2O = a ribonucleoside 5'-diphosphate + phosphate + H(+). The enzyme catalyses Selective cleavage of Tyr-|-Gly bond in the picornavirus polyprotein.. It catalyses the reaction RNA(n) + a ribonucleoside 5'-triphosphate = RNA(n+1) + diphosphate. The catalysed reaction is Selective cleavage of Gln-|-Gly bond in the poliovirus polyprotein. In other picornavirus reactions Glu may be substituted for Gln, and Ser or Thr for Gly.. Its activity is regulated as follows. Replication or transcription is subject to high level of random mutations by the nucleotide analog ribavirin. Functionally, forms an icosahedral capsid of pseudo T=3 symmetry with capsid proteins VP2 and VP3. The capsid is 300 Angstroms in diameter, composed of 60 copies of each capsid protein and enclosing the viral positive strand RNA genome. Capsid protein VP1 mainly forms the vertices of the capsid. Capsid protein VP1 interacts with host cell receptor to provide virion attachment to target host cells. This attachment induces virion internalization. After binding to its receptor, the capsid undergoes conformational changes. Capsid protein VP1 N-terminus (that contains an amphipathic alpha-helix) and capsid protein VP4 are externalized. Together, they shape a pore in the host membrane through which viral genome is translocated to host cell cytoplasm. In terms of biological role, forms an icosahedral capsid of pseudo T=3 symmetry with capsid proteins VP2 and VP3. The capsid is 300 Angstroms in diameter, composed of 60 copies of each capsid protein and enclosing the viral positive strand RNA genome. Its function is as follows. Lies on the inner surface of the capsid shell. After binding to the host receptor, the capsid undergoes conformational changes. Capsid protein VP4 is released, Capsid protein VP1 N-terminus is externalized, and together, they shape a pore in the host membrane through which the viral genome is translocated into the host cell cytoplasm. Component of immature procapsids, which is cleaved into capsid proteins VP4 and VP2 after maturation. Allows the capsid to remain inactive before the maturation step. Functionally, cysteine protease that cleaves viral polyprotein and specific host proteins. It is responsible for the autocatalytic cleavage between the P1 and P2 regions, which is the first cleavage occurring in the polyprotein. Also cleaves the host translation initiation factor EIF4G1, in order to shut down the capped cellular mRNA translation. Inhibits the host nucleus-cytoplasm protein and RNA trafficking by cleaving host members of the nuclear pores. Counteracts stress granule formation probably by antagonizing its assembly or promoting its dissassembly. Cleaves and inhibits host IFIH1/MDA5, thereby inhibiting the type-I IFN production and the establishment of the antiviral state. Cleaves and inhibits host MAVS, thereby inhibiting the type-I IFN production and the establishment of the antiviral state. In terms of biological role, plays an essential role in the virus replication cycle by acting as a viroporin. Creates a pore in the host endoplasmic reticulum and as a consequence releases Ca2+ in the cytoplasm of infected cell. In turn, high levels of cytoplasmic calcium may trigger membrane trafficking and transport of viral ER-associated proteins to viroplasms, sites of viral genome replication. Its function is as follows. Induces and associates with structural rearrangements of intracellular membranes. Displays RNA-binding, nucleotide binding and NTPase activities. May play a role in virion morphogenesis and viral RNA encapsidation by interacting with the capsid protein VP3. Localizes the viral replication complex to the surface of membranous vesicles. Together with protein 3CD binds the Cis-Active RNA Element (CRE) which is involved in RNA synthesis initiation. Acts as a cofactor to stimulate the activity of 3D polymerase, maybe through a nucleid acid chaperone activity. Functionally, localizes the viral replication complex to the surface of membranous vesicles. It inhibits host cell endoplasmic reticulum-to-Golgi apparatus transport and causes the disassembly of the Golgi complex, possibly through GBF1 interaction. This would result in depletion of MHC, trail receptors and IFN receptors at the host cell surface. Plays an essential role in viral RNA replication by recruiting ACBD3 and PI4KB at the viral replication sites, thereby allowing the formation of the rearranged membranous structures where viral replication takes place. In terms of biological role, acts as a primer for viral RNA replication and remains covalently bound to viral genomic RNA. VPg is uridylylated prior to priming replication into VPg-pUpU. The oriI viral genomic sequence may act as a template for this. The VPg-pUpU is then used as primer on the genomic RNA poly(A) by the RNA-dependent RNA polymerase to replicate the viral genome. During genome replication, the VPg-RNA linkage is removed by the host TDP2, thereby accelerating replication. During the late stage of the replication cycle, host TDP2 is excluded from sites of viral RNA synthesis and encapsidation, allowing for the generation of progeny virions. Its function is as follows. Involved in the viral replication complex and viral polypeptide maturation. It exhibits protease activity with a specificity and catalytic efficiency that is different from protease 3C. Protein 3CD lacks polymerase activity. Protein 3CD binds to the 5'UTR of the viral genome. Major viral protease that mediates proteolytic processing of the polyprotein. Cleaves host EIF5B, contributing to host translation shutoff. Also cleaves host PABPC1, contributing to host translation shutoff. Binds and inhibits host IFIH1/MDA5, thereby inhibiting the type-I IFN production and the establishment of the antiviral state. Cleaves host MAP3K7/TAK1, resulting in inhibition of TRAF6-triggered NF-kappa-B induction. Cleaves host NLRP1, triggers host N-glycine-mediated degradation of the autoinhibitory NLRP1 N-terminal fragment. Functionally, replicates the viral genomic RNA on the surface of intracellular membranes. May form linear arrays of subunits that propagate along a strong head-to-tail interaction called interface-I. Covalently attaches UMP to a tyrosine of VPg, which is used to prime RNA synthesis. The positive stranded RNA genome is first replicated at virus induced membranous vesicles, creating a dsRNA genomic replication form. This dsRNA is then used as template to synthesize positive stranded RNA genomes. ss(+)RNA genomes are either translated, replicated or encapsidated. This Homo sapiens (Human) protein is Genome polyprotein.